The primary structure comprises 107 residues: Proteinase inhibitor I-B (107 aa).

The first 22 residues, 1-22, serve as a signal peptide directing secretion; it reads MVKFAHVVAFLLLASLFQPLTA. The propeptide occupies 23-39; that stretch reads RDLEINVLQLDVSQSGC.

The protein belongs to the protease inhibitor I13 (potato type I serine protease inhibitor) family.

It localises to the secreted. The protein is Proteinase inhibitor I-B (TIMPA) of Nicotiana tabacum (Common tobacco).